The chain runs to 477 residues: UDP-N-acetylmuramate--L-alanine ligase (477 aa).

An ATP-binding site is contributed by 115–121 (GTHGKTT).

This sequence belongs to the MurCDEF family.

The protein localises to the cytoplasm. It catalyses the reaction UDP-N-acetyl-alpha-D-muramate + L-alanine + ATP = UDP-N-acetyl-alpha-D-muramoyl-L-alanine + ADP + phosphate + H(+). It participates in cell wall biogenesis; peptidoglycan biosynthesis. In terms of biological role, cell wall formation. The protein is UDP-N-acetylmuramate--L-alanine ligase of Gluconobacter oxydans (strain 621H) (Gluconobacter suboxydans).